A 161-amino-acid polypeptide reads, in one-letter code: 2-C-methyl-D-erythritol 2,4-cyclodiphosphate synthase (161 aa).

Residues D11 and H13 each contribute to the a divalent metal cation site. 4-CDP-2-C-methyl-D-erythritol 2-phosphate is bound by residues 11 to 13 (DIH) and 37 to 38 (HS). A divalent metal cation is bound at residue H45. 4-CDP-2-C-methyl-D-erythritol 2-phosphate contacts are provided by residues 59 to 61 (DIG), 135 to 138 (TTNE), and R145.

Belongs to the IspF family. As to quaternary structure, homotrimer. Requires a divalent metal cation as cofactor.

The catalysed reaction is 4-CDP-2-C-methyl-D-erythritol 2-phosphate = 2-C-methyl-D-erythritol 2,4-cyclic diphosphate + CMP. The protein operates within isoprenoid biosynthesis; isopentenyl diphosphate biosynthesis via DXP pathway; isopentenyl diphosphate from 1-deoxy-D-xylulose 5-phosphate: step 4/6. Its function is as follows. Involved in the biosynthesis of isopentenyl diphosphate (IPP) and dimethylallyl diphosphate (DMAPP), two major building blocks of isoprenoid compounds. Catalyzes the conversion of 4-diphosphocytidyl-2-C-methyl-D-erythritol 2-phosphate (CDP-ME2P) to 2-C-methyl-D-erythritol 2,4-cyclodiphosphate (ME-CPP) with a corresponding release of cytidine 5-monophosphate (CMP). The polypeptide is 2-C-methyl-D-erythritol 2,4-cyclodiphosphate synthase (Cyanothece sp. (strain PCC 7425 / ATCC 29141)).